Here is a 20-residue protein sequence, read N- to C-terminus: Large ribosomal subunit protein bL33 (20 aa).

The protein belongs to the bacterial ribosomal protein bL33 family.

The polypeptide is Large ribosomal subunit protein bL33 (rpmG) (Brevundimonas vesicularis (Pseudomonas vesicularis)).